The sequence spans 198 residues: Probable GTP-binding protein EngB (198 aa).

Residues 22–195 form the EngB-type G domain; sequence DLPEIALAGR…WKAIHKMTKT (174 aa). GTP-binding positions include 30 to 37, 57 to 61, 75 to 78, 142 to 145, and 174 to 176; these read GRSNVGKS, GKTQT, DVPG, TKAD, and FSS. Residues S37 and T59 each contribute to the Mg(2+) site.

This sequence belongs to the TRAFAC class TrmE-Era-EngA-EngB-Septin-like GTPase superfamily. EngB GTPase family. Requires Mg(2+) as cofactor.

Its function is as follows. Necessary for normal cell division and for the maintenance of normal septation. The chain is Probable GTP-binding protein EngB from Bacillus cereus (strain G9842).